Consider the following 2181-residue polypeptide: Non-reducing polyketide synthase dpmaA (2181 aa).

The N-terminal acylcarrier protein transacylase domain (SAT) stretch occupies residues 74 to 180; that stretch reads QWVKGNSTQP…LALCCGAYID (107 aa). Positions 347–779 constitute a Ketosynthase family 3 (KS3) domain; sequence QAQLLVLGPV…GTNAAMLVCQ (433 aa). Residues cysteine 525, histidine 661, and histidine 702 each act as for beta-ketoacyl synthase activity in the active site. The malonyl-CoA:ACP transacylase (MAT) domain stretch occupies residues 891-1193; the sequence is VLAGQTGRRV…SFYPAALGEP (303 aa). Serine 977 (for acyl/malonyl transferase activity) is an active-site residue. The interval 1269 to 1401 is N-terminal hotdog fold; that stretch reads VSLIGKTQNA…GVITLQEVYS (133 aa). The 311-residue stretch at 1269–1579 folds into the PKS/mFAS DH domain; sequence VSLIGKTQNA…FQKIAISSLK (311 aa). Positions 1276–1573 are product template (PT) domain; that stretch reads QNAGVQTVEY…TILGAKFQKI (298 aa). The interval 1425 to 1579 is C-terminal hotdog fold; that stretch reads SASVVQGDFI…FQKIAISSLK (155 aa). The segment covering 1587–1603 has biased composition (polar residues); that stretch reads GVPQTSGGRTPSSSITE. Disordered regions lie at residues 1587–1618 and 1652–1675; these read GVPQ…PIPG and ISGS…AMET. Residues 1653–1670 are compositionally biased toward low complexity; that stretch reads SGSSRSTSSSPPSLESRS. The Carrier domain maps to 1677-1753; sequence EITEGAGSAL…TLFHTIFPQQ (77 aa). Serine 1713 carries the post-translational modification O-(pantetheine 4'-phosphoryl)serine. Positions 1982–2164 are methyltransferase (CMeT) domain; it reads EFMNCLFSYN…QSGFDHIDWT (183 aa).

It participates in secondary metabolite biosynthesis; terpenoid biosynthesis. In terms of biological role, non-reducing polyketide synthase; part of the gene cluster that mediates the biosynthesis of the diterpenoid pyrones subglutinols A and B. The first step of the pathway is the synthesis of the alpha-pyrone moiety by the polyketide synthase dpmaA via condensation of one acetyl-CoA starter unit with 3 malonyl-CoA units and 2 methylations. The alpha-pyrone is then combined with geranylgeranyl pyrophosphate (GGPP) formed by the GGPP synthase dpmaD through the action of the prenyltransferase dpmaC to yield a linear alpha-pyrone diterpenoid. Subsequent steps in the diterpenoid pyrone biosynthetic pathway involve the decalin core formation, which is initiated by the epoxidation of the C10-C11 olefin by the FAD-dependent oxidoreductase dpmaE, and is followed by a cyclization cascade catalyzed by the terpene cyclase dpmaB. The dehydrogenase dpmaF is then involved in tetrahydrofuran (THF) ring formation at the C5 unit to complete the formation of subglutinols A and B. The polypeptide is Non-reducing polyketide synthase dpmaA (Metarhizium anisopliae (Entomophthora anisopliae)).